Reading from the N-terminus, the 469-residue chain is Putative F-box/LRR-repeat protein At5g02930 (469 aa).

The region spanning 27–77 (VDSISDLPDAVLQHIFSYIPTELAIRTSVLSKRWRHVWSETPHLSFEWLKV) is the F-box domain. LRR repeat units follow at residues 30–58 (ISDL…VLSK), 178–203 (DCTM…SLKF), 204–214 (CMSLKYLNLSK), 223–250 (IERI…RLRD), 296–321 (TMLK…SLSK), and 341–366 (IIRS…TVYT).

In Arabidopsis thaliana (Mouse-ear cress), this protein is Putative F-box/LRR-repeat protein At5g02930.